A 734-amino-acid chain; its full sequence is Tripartite terminase subunit 3 (734 aa).

Positions 184-190 (ASKRARV) match the Nuclear localization signal motif. The Walker A motif motif lies at 259–266 (VPRRHGKT). The Walker B motif motif lies at 353 to 358 (LLFVDE). Glutamate 358 functions as the For ATPase activity in the catalytic mechanism. Catalysis depends on for nuclease activity residues aspartate 511, glutamate 583, and aspartate 707.

It belongs to the herpesviridae TRM3 protein family. Interacts with the terminase subunits TRM1 and TRM2. Interacts with portal protein.

It is found in the host nucleus. Functionally, component of the molecular motor that translocates viral genomic DNA in empty capsid during DNA packaging. Forms a tripartite terminase complex together with TRM1 and TRM2 in the host cytoplasm. Once the complex reaches the host nucleus, it interacts with the capsid portal vertex. This portal forms a ring in which genomic DNA is translocated into the capsid. TRM3 carries an RNase H-like nuclease activity that plays an important role for the cleavage of concatemeric viral DNA into unit length genomes. The polypeptide is Tripartite terminase subunit 3 (Equus caballus (Horse)).